The primary structure comprises 213 residues: Ribosomal RNA large subunit methyltransferase E (213 aa).

S-adenosyl-L-methionine is bound by residues Gly60, Trp62, Asp80, Asp96, and Asp121. Lys161 acts as the Proton acceptor in catalysis.

Belongs to the class I-like SAM-binding methyltransferase superfamily. RNA methyltransferase RlmE family.

It localises to the cytoplasm. The enzyme catalyses uridine(2552) in 23S rRNA + S-adenosyl-L-methionine = 2'-O-methyluridine(2552) in 23S rRNA + S-adenosyl-L-homocysteine + H(+). In terms of biological role, specifically methylates the uridine in position 2552 of 23S rRNA at the 2'-O position of the ribose in the fully assembled 50S ribosomal subunit. This is Ribosomal RNA large subunit methyltransferase E from Xylella fastidiosa (strain M23).